The sequence spans 162 residues: MTLGDTLFTLVTFLVLMLAVGKVAWKPVSKMMADRQQKISGDLDYAEKSRKDADALVAKRQEELQHSQADAVKIVNQAKENGEKLRQSLVDAANAEVTTMKKNAQTEIDQARKDALASAKNDVADLSLTIAQKLIGKELNADDQKGLIDDYIKRLGDANGSH.

Residues 6–25 (TLFTLVTFLVLMLAVGKVAW) form a helical membrane-spanning segment.

It belongs to the ATPase B chain family. In terms of assembly, F-type ATPases have 2 components, F(1) - the catalytic core - and F(0) - the membrane proton channel. F(1) has five subunits: alpha(3), beta(3), gamma(1), delta(1), epsilon(1). F(0) has three main subunits: a(1), b(2) and c(10-14). The alpha and beta chains form an alternating ring which encloses part of the gamma chain. F(1) is attached to F(0) by a central stalk formed by the gamma and epsilon chains, while a peripheral stalk is formed by the delta and b chains.

It localises to the cell membrane. Its function is as follows. F(1)F(0) ATP synthase produces ATP from ADP in the presence of a proton or sodium gradient. F-type ATPases consist of two structural domains, F(1) containing the extramembraneous catalytic core and F(0) containing the membrane proton channel, linked together by a central stalk and a peripheral stalk. During catalysis, ATP synthesis in the catalytic domain of F(1) is coupled via a rotary mechanism of the central stalk subunits to proton translocation. In terms of biological role, component of the F(0) channel, it forms part of the peripheral stalk, linking F(1) to F(0). This chain is ATP synthase subunit b, found in Lacticaseibacillus paracasei (strain ATCC 334 / BCRC 17002 / CCUG 31169 / CIP 107868 / KCTC 3260 / NRRL B-441) (Lactobacillus paracasei).